We begin with the raw amino-acid sequence, 212 residues long: ER lumen protein-retaining receptor 2 (212 aa).

Topologically, residues 1 to 4 (MNVF) are lumenal. A helical membrane pass occupies residues 5-24 (RLSGDLSHLAAIIILLLKIW). At 25–32 (KSRSCAGI) the chain is on the cytoplasmic side. Residues 33 to 52 (SGKSQLLFALVFTTRYLDLL) form a helical membrane-spanning segment. The interval 47-48 (RY) is interaction with the K-D-E-L motif on target proteins. The Lumenal segment spans residues 53 to 58 (TSFISL). The chain crosses the membrane as a helical span at residues 59 to 79 (YNTSMKVIYIGCAYATVYLIY). Residues 80–92 (MKFKATYDGNHDT) are Cytoplasmic-facing. The helical transmembrane segment at 93 to 110 (FRVEFLVVPVGGLSVLVN) threads the bilayer. The Lumenal segment spans residues 111 to 116 (HDFSPL). The helical transmembrane segment at 117–135 (EILWTFSIYLESVAILPQL) threads the bilayer. Residues 136 to 149 (FMISKTGEAETITT) lie on the Cytoplasmic side of the membrane. Residues 150–168 (HYLFFLGLYRALYLFNWIW) traverse the membrane as a helical segment. The interaction with the K-D-E-L motif on target proteins stretch occupies residues 159 to 169 (RALYLFNWIWR). Over 169–178 (RYSFEGFFDL) the chain is Lumenal. Residues 179 to 199 (IAIVAGVVQTILYCDFFYLYV) traverse the membrane as a helical segment. At 200–212 (TKVLKGKKLSLPA) the chain is on the cytoplasmic side. The segment at 204-207 (KGKK) is important for recycling of cargo proteins with the sequence motif K-D-E-L from the Golgi to the endoplasmic reticulum.

This sequence belongs to the ERD2 family.

It is found in the endoplasmic reticulum membrane. Its subcellular location is the golgi apparatus membrane. The protein resides in the cytoplasmic vesicle. It localises to the COPI-coated vesicle membrane. In terms of biological role, receptor for the C-terminal sequence motif K-D-E-L that is present on endoplasmic reticulum resident proteins and that mediates their recycling from the Golgi back to the endoplasmic reticulum. Binding is pH dependent, and is optimal at pH 5-5.4. The polypeptide is ER lumen protein-retaining receptor 2 (kdelr2) (Xenopus tropicalis (Western clawed frog)).